The sequence spans 877 residues: Valine--tRNA ligase (877 aa).

A 'HIGH' region motif is present at residues 46 to 56; it reads PYPTGSIHMGH. The 'KMSKS' region signature appears at 529 to 533; sequence KMSKS. K532 provides a ligand contact to ATP.

It belongs to the class-I aminoacyl-tRNA synthetase family. ValS type 2 subfamily.

The protein resides in the cytoplasm. The catalysed reaction is tRNA(Val) + L-valine + ATP = L-valyl-tRNA(Val) + AMP + diphosphate. Catalyzes the attachment of valine to tRNA(Val). As ValRS can inadvertently accommodate and process structurally similar amino acids such as threonine, to avoid such errors, it has a 'posttransfer' editing activity that hydrolyzes mischarged Thr-tRNA(Val) in a tRNA-dependent manner. In Methanothermobacter thermautotrophicus (strain ATCC 29096 / DSM 1053 / JCM 10044 / NBRC 100330 / Delta H) (Methanobacterium thermoautotrophicum), this protein is Valine--tRNA ligase.